A 343-amino-acid polypeptide reads, in one-letter code: Heat-inducible transcription repressor HrcA (343 aa).

The protein belongs to the HrcA family.

Its function is as follows. Negative regulator of class I heat shock genes (grpE-dnaK-dnaJ and groELS operons). Prevents heat-shock induction of these operons. The sequence is that of Heat-inducible transcription repressor HrcA from Bacillus subtilis (strain 168).